Reading from the N-terminus, the 485-residue chain is Homospermidine synthase (485 aa).

This sequence belongs to the saccharopine dehydrogenase family. NAD(+) is required as a cofactor.

The catalysed reaction is 2 putrescine = sym-homospermidine + NH4(+). It catalyses the reaction putrescine + spermidine = sym-homospermidine + propane-1,3-diamine. Functionally, involved in the NAD(+)-dependent synthesis of the polyamine homospermidine from putrescine. This is Homospermidine synthase (hss) from Mesorhizobium japonicum (strain LMG 29417 / CECT 9101 / MAFF 303099) (Mesorhizobium loti (strain MAFF 303099)).